Here is a 228-residue protein sequence, read N- to C-terminus: Probable U3 small nucleolar RNA-associated protein 11 (228 aa).

Disordered stretches follow at residues 1–23 and 192–211; these read MSSL…EARK and SMQK…DDEL. Residues 12–23 show a composition bias toward basic and acidic residues; the sequence is AHKERSQPEARK.

The protein belongs to the UTP11 family. In terms of assembly, component of the ribosomal small subunit (SSU) processome.

The protein resides in the nucleus. Its subcellular location is the nucleolus. Functionally, involved in nucleolar processing of pre-18S ribosomal RNA. The protein is Probable U3 small nucleolar RNA-associated protein 11 of Arabidopsis thaliana (Mouse-ear cress).